Here is a 294-residue protein sequence, read N- to C-terminus: Epimerase family protein SDR39U1 (294 aa).

NADP(+) is bound by residues 31 to 32 (SR), 58 to 59 (LA), E77, R82, and V160.

This sequence belongs to the NAD(P)-dependent epimerase/dehydratase family. SDR39U1 subfamily.

Functionally, putative NADP-dependent oxidoreductase. The chain is Epimerase family protein SDR39U1 (SDR39U1) from Bos taurus (Bovine).